The following is a 60-amino-acid chain: Chromatin protein Cren7 (60 aa).

The protein belongs to the Cren7 family. In terms of assembly, monomer. Methylated at multiple sites, to varying extents.

It is found in the chromosome. Its subcellular location is the cytoplasm. In terms of biological role, a chromatin protein, binds double-stranded DNA without sequence specificity. Constrains negative DNA supercoils. This is Chromatin protein Cren7 from Saccharolobus islandicus (strain M.16.4 / Kamchatka #3) (Sulfolobus islandicus).